Reading from the N-terminus, the 127-residue chain is MSELRFTADHEWLRAEADGSVTVGITPYAQESLGDVVFVQLPELQAYAQHAEVSVVESVKAASSINMPLDGEVVEVNAVLDATPERVNEDALGAGWFFRFIPQDAYAIHGLLDQDAYDRLIKANAQA.

One can recognise a Lipoyl-binding domain in the interval 20 to 101 (SVTVGITPYA…LGAGWFFRFI (82 aa)). At Lys60 the chain carries N6-lipoyllysine.

Belongs to the GcvH family. As to quaternary structure, the glycine cleavage system is composed of four proteins: P, T, L and H. (R)-lipoate is required as a cofactor.

The glycine cleavage system catalyzes the degradation of glycine. The H protein shuttles the methylamine group of glycine from the P protein to the T protein. The polypeptide is Glycine cleavage system H protein 1 (Pseudomonas syringae pv. tomato (strain ATCC BAA-871 / DC3000)).